The sequence spans 514 residues: ATP synthase subunit alpha (514 aa).

170 to 177 lines the ATP pocket; that stretch reads GDRQIGKT.

Belongs to the ATPase alpha/beta chains family. In terms of assembly, F-type ATPases have 2 components, CF(1) - the catalytic core - and CF(0) - the membrane proton channel. CF(1) has five subunits: alpha(3), beta(3), gamma(1), delta(1), epsilon(1). CF(0) has three main subunits: a(1), b(2) and c(9-12). The alpha and beta chains form an alternating ring which encloses part of the gamma chain. CF(1) is attached to CF(0) by a central stalk formed by the gamma and epsilon chains, while a peripheral stalk is formed by the delta and b chains.

It localises to the cell inner membrane. The catalysed reaction is ATP + H2O + 4 H(+)(in) = ADP + phosphate + 5 H(+)(out). In terms of biological role, produces ATP from ADP in the presence of a proton gradient across the membrane. The alpha chain is a regulatory subunit. This chain is ATP synthase subunit alpha, found in Pseudomonas fluorescens (strain ATCC BAA-477 / NRRL B-23932 / Pf-5).